We begin with the raw amino-acid sequence, 856 residues long: Rod cGMP-specific 3',5'-cyclic phosphodiesterase subunit beta (856 aa).

The residue at position 2 (serine 2) is an N-acetylserine. 2 GAF domains span residues 71–220 (NMER…TLNL) and 252–429 (DIER…GWSV). Positions 481–814 (EEDELGILLK…KEWKALADEY (334 aa)) constitute a PDEase domain. Histidine 557 serves as the catalytic Proton donor. A divalent metal cation is bound by residues histidine 561, histidine 597, aspartate 598, and aspartate 718. Over residues 823 to 833 (EEKQQQEDRTT) the composition is skewed to basic and acidic residues. A disordered region spans residues 823–842 (EEKQQQEDRTTAKKAGTEIC). Cysteine 853 carries S-geranylgeranyl cysteine lipidation. Residues 854–856 (CIL) constitute a propeptide, removed in mature form.

This sequence belongs to the cyclic nucleotide phosphodiesterase family. As to quaternary structure, oligomer composed of two catalytic chains (alpha and beta), an inhibitory chain (gamma) and the delta chain. It depends on a divalent metal cation as a cofactor.

It is found in the membrane. Its subcellular location is the cell projection. The protein resides in the cilium. The protein localises to the photoreceptor outer segment. It catalyses the reaction 3',5'-cyclic GMP + H2O = GMP + H(+). In terms of biological role, rod-specific cGMP phosphodiesterase that catalyzes the hydrolysis of 3',5'-cyclic GMP. Necessary for the formation of a functional phosphodiesterase holoenzyme. Involved in retinal circadian rhythm photoentrainment via modulation of UVA and orange light-induced phase-shift of the retina clock. May participate in processes of transmission and amplification of the visual signal. This is Rod cGMP-specific 3',5'-cyclic phosphodiesterase subunit beta from Canis lupus familiaris (Dog).